Reading from the N-terminus, the 141-residue chain is Hemoglobin subunit alpha-D (141 aa).

Positions 1 to 141 (MLTAEDKKLI…VSAVLAEKYR (141 aa)) constitute a Globin domain. Heme b-binding residues include H58 and H87.

It belongs to the globin family. Heterotetramer of two alpha-D chains and two beta chains. Red blood cells.

Involved in oxygen transport from the lung to the various peripheral tissues. In Meleagris gallopavo (Wild turkey), this protein is Hemoglobin subunit alpha-D (HBAD).